A 461-amino-acid polypeptide reads, in one-letter code: MFPLGSVVEVITGERGFVRYAGEVENRKGVYVGLELLPEFAEFGKNRGVVDGREYFKTKNNEKTGIFVPFDKCKLASSISSSPSPKIDGTAASIGMGFPPMSPNLQSSIPRLTNVSSSSNLSMNTISSTALTPTEKILQKRIEDLLYERQNHQQQLEEVLATVDQLQSLVTNFNDQQDEVDELRERITLKEERIQQMRNEASQRRFEFKTTIECLEESSNRAIETYENRIAELEAQLEMYMSGKSEDDLLFSLQQERDYALNQVEILQERVDTLMKQKANSSTANEKLSHMESSSPTLTNASFESPKRGKGSNDLPENHPQRRQTLEFYEIEIEVLREKVEKLQALSDEKDFYISKLEKSLDRNDTTPVPSDEKLSNYAAEKENLVSRISELEHTIEQLTINNERDNERMSPAEFELETTQEVEENDSDSHDDEETWCEVCETNNHSLQECPTVFGSTDEA.

In terms of domain architecture, CAP-Gly spans 22–69; that stretch reads GEVENRKGVYVGLELLPEFAEFGKNRGVVDGREYFKTKNNEKTGIFVP. A phosphoserine mark is found at serine 82, serine 84, serine 289, serine 294, and serine 305. A coiled-coil region spans residues 134–418; that stretch reads TEKILQKRIE…RMSPAEFELE (285 aa). The span at 278-303 shows a compositional bias: polar residues; sequence KANSSTANEKLSHMESSSPTLTNASF. The segment at 278–323 is disordered; the sequence is KANSSTANEKLSHMESSSPTLTNASFESPKRGKGSNDLPENHPQRR. Threonine 367 carries the phosphothreonine modification. Residues 417–437 form a disordered region; sequence LETTQEVEENDSDSHDDEETW.

As to quaternary structure, monomer. Interacts with tea1 and tea2. Interacts with tea4 in the presence of tea1.

The protein localises to the cytoplasm. The protein resides in the cytoskeleton. Its function is as follows. Has a role in stabilizing and targeting the growing tips of the microtubules along the long axis of the cell, directing them to the ends of the cell. Acts as a cargo for tea2. In Schizosaccharomyces pombe (strain 972 / ATCC 24843) (Fission yeast), this protein is Tip elongation protein 1 (tip1).